We begin with the raw amino-acid sequence, 442 residues long: UDP-N-acetylmuramoylalanine--D-glutamate ligase (442 aa).

113–119 (GSNGKTT) is a binding site for ATP.

Belongs to the MurCDEF family.

It is found in the cytoplasm. The enzyme catalyses UDP-N-acetyl-alpha-D-muramoyl-L-alanine + D-glutamate + ATP = UDP-N-acetyl-alpha-D-muramoyl-L-alanyl-D-glutamate + ADP + phosphate + H(+). Its pathway is cell wall biogenesis; peptidoglycan biosynthesis. In terms of biological role, cell wall formation. Catalyzes the addition of glutamate to the nucleotide precursor UDP-N-acetylmuramoyl-L-alanine (UMA). The chain is UDP-N-acetylmuramoylalanine--D-glutamate ligase from Coxiella burnetii (strain Dugway 5J108-111).